A 284-amino-acid polypeptide reads, in one-letter code: Chaperone protein dnaJ 6 (284 aa).

Disordered regions lie at residues 1–30 (MGRK…ETSL), 196–221 (NKIS…AKDS), and 252–284 (GGDA…SRGK). The Nuclear localization signal signature appears at 3–6 (RKKK). Positions 29 to 94 (SLYEVLGVER…EKRAVYDQTG (66 aa)) constitute a J domain. The Nuclear localization signal motif lies at 209 to 215 (RKRKKKK). Acidic residues predominate over residues 255–265 (AEAEPTEEEFE). Positions 266 to 275 (AAQRRIESKR) are enriched in basic and acidic residues.

The protein belongs to the DnaJ family. C/III subfamily. As to expression, highly expressed in leaves, flowers and siliques, and to lower extent in roots.

It localises to the nucleus. Plays a continuous role in plant development probably in the structural organization of compartments. The polypeptide is Chaperone protein dnaJ 6 (ATJ6) (Arabidopsis thaliana (Mouse-ear cress)).